A 296-amino-acid chain; its full sequence is Cytidine deaminase (296 aa).

CMP/dCMP-type deaminase domains follow at residues 48 to 168 (DADA…FGPV) and 187 to 296 (QNMN…FIEE). A substrate-binding site is contributed by 89-91 (NME). H102 is a binding site for Zn(2+). E104 functions as the Proton donor in the catalytic mechanism. Zn(2+)-binding residues include C129 and C132.

Belongs to the cytidine and deoxycytidylate deaminase family. Homodimer. Zn(2+) serves as cofactor.

It carries out the reaction cytidine + H2O + H(+) = uridine + NH4(+). It catalyses the reaction 2'-deoxycytidine + H2O + H(+) = 2'-deoxyuridine + NH4(+). Its function is as follows. This enzyme scavenges exogenous and endogenous cytidine and 2'-deoxycytidine for UMP synthesis. The sequence is that of Cytidine deaminase from Pectobacterium carotovorum subsp. carotovorum (strain PC1).